Consider the following 23-residue polypeptide: Caerulein precursor fragment R6 (23 aa).

Expressed by the skin glands.

It is found in the secreted. In terms of biological role, antimicrobial peptide. The chain is Caerulein precursor fragment R6 from Xenopus ruwenzoriensis (Uganda clawed frog).